The following is a 347-amino-acid chain: Quinolinate synthase (347 aa).

Residues His47 and Ser68 each contribute to the iminosuccinate site. Residue Cys113 coordinates [4Fe-4S] cluster. Iminosuccinate contacts are provided by residues Tyr139–Asn141 and Ser156. Cys200 provides a ligand contact to [4Fe-4S] cluster. Residues His226–Glu228 and Thr243 contribute to the iminosuccinate site. [4Fe-4S] cluster is bound at residue Cys297.

The protein belongs to the quinolinate synthase family. Type 1 subfamily. It depends on [4Fe-4S] cluster as a cofactor.

The protein resides in the cytoplasm. It carries out the reaction iminosuccinate + dihydroxyacetone phosphate = quinolinate + phosphate + 2 H2O + H(+). It participates in cofactor biosynthesis; NAD(+) biosynthesis; quinolinate from iminoaspartate: step 1/1. Its function is as follows. Catalyzes the condensation of iminoaspartate with dihydroxyacetone phosphate to form quinolinate. The polypeptide is Quinolinate synthase (Shigella dysenteriae serotype 1 (strain Sd197)).